The following is a 263-amino-acid chain: Sulfur carrier protein FdhD (263 aa).

Residue Cys107 is the Cysteine persulfide intermediate of the active site.

This sequence belongs to the FdhD family.

It localises to the cytoplasm. Required for formate dehydrogenase (FDH) activity. Acts as a sulfur carrier protein that transfers sulfur from IscS to the molybdenum cofactor prior to its insertion into FDH. The sequence is that of Sulfur carrier protein FdhD from Geobacillus kaustophilus (strain HTA426).